A 115-amino-acid polypeptide reads, in one-letter code: Synaptobrevin homolog 2 (115 aa).

Positions 1–16 are enriched in low complexity; sequence MSSSVPYDPYVPPEES. The tract at residues 1–28 is disordered; the sequence is MSSSVPYDPYVPPEESNSGANPNSQNKT. Residues 1–93 lie on the Cytoplasmic side of the membrane; sequence MSSSVPYDPY…MWWKDLKMRM (93 aa). Over residues 17–28 the composition is skewed to polar residues; sequence NSGANPNSQNKT. The v-SNARE coiled-coil homology domain maps to 27–87; it reads KTAALRQEID…NRVRKQMWWK (61 aa). Residue Ser-58 is modified to Phosphoserine. Lys-62 is covalently cross-linked (Glycyl lysine isopeptide (Lys-Gly) (interchain with G-Cter in ubiquitin)). Residue Cys-94 is the site of S-palmitoyl cysteine attachment. A helical; Anchor for type IV membrane protein membrane pass occupies residues 94 to 112; sequence CLFLVVIILLVVIIVPIVV. Residues 113–115 lie on the Vesicular side of the membrane; that stretch reads HFS.

Belongs to the synaptobrevin family. Post-translationally, palmitoylated by SWF1.

It localises to the endomembrane system. Its function is as follows. SNC1 and SNC2 are vesicle-targeting proteins essential for normal secretory traffic between the Golgi and the plasma membrane. They may also be involved in vesicle fusion. The protein is Synaptobrevin homolog 2 (SNC2) of Saccharomyces cerevisiae (strain ATCC 204508 / S288c) (Baker's yeast).